A 115-amino-acid chain; its full sequence is Large ribosomal subunit protein bL20 (115 aa).

The protein belongs to the bacterial ribosomal protein bL20 family.

Functionally, binds directly to 23S ribosomal RNA and is necessary for the in vitro assembly process of the 50S ribosomal subunit. It is not involved in the protein synthesizing functions of that subunit. The chain is Large ribosomal subunit protein bL20 from Prochlorococcus marinus (strain MIT 9313).